The sequence spans 378 residues: Glutamate 5-kinase (378 aa).

Residue Lys14 coordinates ATP. Positions 54, 141, and 153 each coordinate substrate. Residue 173–174 (SD) coordinates ATP. Residues 279-356 (AGRLTVDAGA…DEISAILGYD (78 aa)) enclose the PUA domain.

Belongs to the glutamate 5-kinase family.

The protein localises to the cytoplasm. It carries out the reaction L-glutamate + ATP = L-glutamyl 5-phosphate + ADP. It participates in amino-acid biosynthesis; L-proline biosynthesis; L-glutamate 5-semialdehyde from L-glutamate: step 1/2. Catalyzes the transfer of a phosphate group to glutamate to form L-glutamate 5-phosphate. The polypeptide is Glutamate 5-kinase (Brucella abortus (strain S19)).